The sequence spans 163 residues: Nucleotide-binding protein YajQ (163 aa).

The protein belongs to the YajQ family.

Nucleotide-binding protein. This is Nucleotide-binding protein YajQ from Salmonella agona (strain SL483).